Reading from the N-terminus, the 206-residue chain is Sclerostin domain-containing protein 1 (206 aa).

The N-terminal stretch at 1 to 23 (MLPPAIHLSLIPLLCILMKNCLA) is a signal peptide. A disordered region spans residues 42–62 (AHPSSNSTLNQARNGGRHFSS). Polar residues predominate over residues 43–62 (HPSSNSTLNQARNGGRHFSS). The N-linked (GlcNAc...) asparagine glycan is linked to N47. 4 cysteine pairs are disulfide-bonded: C75–C133, C89–C147, C100–C163, and C104–C165. In terms of domain architecture, CTCK spans 75 to 170 (CRELRSTKYI…TACKCKRYTR (96 aa)). N173 carries N-linked (GlcNAc...) asparagine glycosylation. Positions 176–206 (SHNFESVSPAKPAQHHRERKRASKSSKHSLS) are disordered. The span at 188–206 (AQHHRERKRASKSSKHSLS) shows a compositional bias: basic residues.

The protein belongs to the sclerostin family. As to quaternary structure, interacts with BMP2, BMP4, BMP6 and BMP7 with high affinity. As to expression, highly expressed within the maximally sensitized/receptive endometrium. Weakly expressed in brain, kidney and the female reproductive tract. Expressed in the dermal papilla (DP) and at high level in the precortex of both anagen vibrissae and pelage follicles. Dynymic expression during the hair cycle.

It is found in the secreted. In terms of biological role, directly antagonizes activity of BMP2, BMP4, BMP6 and BMP7 in a dose-dependent manner. May be involved in the onset of endometrial receptivity for implantation/sensitization for the decidual cell reaction. Enhances Wnt signaling and inhibits TGF-beta signaling. The sequence is that of Sclerostin domain-containing protein 1 (Sostdc1) from Rattus norvegicus (Rat).